A 770-amino-acid chain; its full sequence is MLPQRPQLLLLAGLLSLQSVLSQECTKYKVSTCRDCIESGPSCAWCQKLNFTGQGEPDSTRCDTRAQLLSKGCPADDIMEPKSLAETRQSQAGRQKQLSPEEVTLYLRPGQAAAFNVTFQRAKGYPIDLYYLMDLSYSMVDDLANVKKLGGDLLRALNDITESGRIGFGSFVDKTVLPFVNTHPEKLRNPCPNKEKECQPPFAFRHVLKLTDNSKQFETEVGKQLISGNLDAPEGGLDAMMQVAACPEEIGWRNVTRLLVFATDDGFHFAGDGKLGAILTPNDGRCHLEDNLYKSSNEFDYPSVGQLAHKLAESNIQPIFAVTKKMVKTYEKLTEIIPKSAVGELSEDSKNVVELIKSAYNKLSSRVFLDHNTLPDTLKVAYDSFCSNRVSQVDQPRGDCDGVQINVPITFQVKVTATECIQEQSFTIRALGFTDTVTVRVLPQCECQCREASRDRGVCGGRGSMECGVCRCDAGYIGKNCECQTHGRSSQELEGSCRKDNSSIICSGLGDCICGQCVCHTSDVPNKKIYGQFCECDNVNCERYDGQVCGGDKRGLCFCGACRCNDQYEGSACQCLKSTQGCLNLNGVECSGRGRCRCNVCQCDPGYQPPLCIDCPGCPVPCAGFAPCTECLKFDKGPFAKNCSAACGQTKLLSSPVPGGRKCKERDSEGCWMTYTLVQRDGRNRYDVHVDDMLECVKGPNIAAIVGGTVGGVVLVGILLLAIWKALTHLSDLREYHRFEKEKLKSQWNNDNPLFKSATTTVMNPKFAES.

Positions 1 to 22 (MLPQRPQLLLLAGLLSLQSVLS) are cleaved as a signal peptide. Gln23 is subject to Pyrrolidone carboxylic acid. The Extracellular segment spans residues 23 to 701 (QECTKYKVST…DMLECVKGPN (679 aa)). A PSI domain is found at 24-74 (ECTKYKVSTCRDCIESGPSCAWCQKLNFTGQGEPDSTRCDTRAQLLSKGCP). Disulfide bonds link Cys25-Cys43, Cys33-Cys447, Cys36-Cys62, Cys46-Cys73, Cys191-Cys198, Cys246-Cys286, Cys386-Cys400, Cys420-Cys445, Cys449-Cys467, Cys459-Cys470, Cys472-Cys481, Cys483-Cys514, Cys497-Cys512, Cys506-Cys517, Cys519-Cys534, Cys536-Cys559, Cys541-Cys557, Cys549-Cys562, Cys564-Cys573, Cys575-Cys598, Cys582-Cys596, Cys590-Cys601, Cys603-Cys612, Cys615-Cys618, Cys622-Cys663, Cys628-Cys647, Cys631-Cys643, and Cys671-Cys696. N-linked (GlcNAc...) asparagine glycans are attached at residues Asn50 and Asn116. A VWFA domain is found at 124–363 (GYPIDLYYLM…ELIKSAYNKL (240 aa)). Mg(2+) is bound by residues Ser136 and Ser138. Ca(2+) contacts are provided by Ser138, Asp141, Asp142, and Asp173. Ca(2+) is bound by residues Asn229, Asp231, Pro233, and Glu234. Glu234 contacts Mg(2+). An N-linked (GlcNAc...) asparagine glycan is attached at Asn254. Ca(2+) contacts are provided by Asp264 and Glu347. Positions 397–399 (RGD) match the Cell attachment site motif. I-EGF domains lie at 449-482 (CREASRDRGVCGGRGSMECGVCRCDAGYIGKNCE), 483-535 (CQTH…QFCE), 536-574 (CDNVNCERYDGQVCGGDKRGLCFCGACRCNDQYEGSACQ), and 575-613 (CLKSTQGCLNLNGVECSGRGRCRCNVCQCDPGYQPPLCI). N-linked (GlcNAc...) asparagine glycosylation is present at Asn501. An N-linked (GlcNAc...) asparagine glycan is attached at Asn642. A helical membrane pass occupies residues 702–724 (IAAIVGGTVGGVVLVGILLLAIW). The Cytoplasmic portion of the chain corresponds to 725–770 (KALTHLSDLREYHRFEKEKLKSQWNNDNPLFKSATTTVMNPKFAES). Ser746 and Ser757 each carry phosphoserine. Phosphothreonine occurs at positions 759 and 761.

This sequence belongs to the integrin beta chain family. Heterodimer of an alpha and a beta subunit. The ITGB2 beta subunit associates with the ITGAL, ITGAM, ITGAX or ITGAD alpha subunits. Found in a complex with CD177 and ITGAM/CD11b. Interacts with FGR. Interacts with COPS5 and RANBP9. Interacts with FLNA (via filamin repeats 4, 9, 12, 17, 19, 21, and 23). Interacts with THBD. Both Ser-746 and Ser-757 become phosphorylated when T-cells are exposed to phorbol esters. Phosphorylation on Thr-759 (but not on Ser-757) allows interaction with 14-3-3 proteins.

The protein resides in the cell membrane. It localises to the membrane raft. Functionally, integrin ITGAL/ITGB2 is a receptor for ICAM1, ICAM2, ICAM3 and ICAM4. Integrin ITGAL/ITGB2 is also a receptor for the secreted form of ubiquitin-like protein ISG15; the interaction is mediated by ITGAL. Integrins ITGAM/ITGB2 and ITGAX/ITGB2 are receptors for the iC3b fragment of the third complement component and for fibrinogen. Integrin ITGAX/ITGB2 recognizes the sequence G-P-R in fibrinogen alpha-chain. Integrin ITGAM/ITGB2 recognizes P1 and P2 peptides of fibrinogen gamma chain. Integrin ITGAM/ITGB2 is also a receptor for factor X. Integrin ITGAD/ITGB2 is a receptor for ICAM3 and VCAM1. Contributes to natural killer cell cytotoxicity. Involved in leukocyte adhesion and transmigration of leukocytes including T-cells and neutrophils. Triggers neutrophil transmigration during lung injury through PTK2B/PYK2-mediated activation. Integrin ITGAL/ITGB2 in association with ICAM3, contributes to apoptotic neutrophil phagocytosis by macrophages. In association with alpha subunit ITGAM/CD11b, required for CD177-PRTN3-mediated activation of TNF primed neutrophils. The protein is Integrin beta-2 (ITGB2) of Ovis canadensis (Bighorn sheep).